The primary structure comprises 238 residues: Large ribosomal subunit protein uL2 (238 aa).

The segment at 201 to 238 (FGGGGHQHPGRPKTIARGTSPGRTVGHVAARQTGRSRK) is disordered.

This sequence belongs to the universal ribosomal protein uL2 family. As to quaternary structure, part of the 50S ribosomal subunit. Forms a bridge to the 30S subunit in the 70S ribosome.

Its function is as follows. One of the primary rRNA binding proteins. Required for association of the 30S and 50S subunits to form the 70S ribosome, for tRNA binding and peptide bond formation. It has been suggested to have peptidyltransferase activity; this is somewhat controversial. Makes several contacts with the 16S rRNA in the 70S ribosome. In Methanoregula boonei (strain DSM 21154 / JCM 14090 / 6A8), this protein is Large ribosomal subunit protein uL2.